Reading from the N-terminus, the 558-residue chain is MSRISTTSTTPSRVRAANSHYSVISKPRAQDDNGLTGGKPKSSGYDVKNDPAKRRSILLKRAKSAEEEMAVLAPQRARSVNRPAVVEQFGCPRRPISRKSEETVMATAAAEDEKRKRMEELEEKLVVNESLIKDLQLQVLNLKTELEEARNSNVELELNNRKLSQDLVSAEAKISSLSSNDKPAKEHQNSRFKDIQRLIASKLEQPKVKKEVAVESSRLSPPSPSPSRLPPTPPLPKFLVSPASSLGKRDENSSPFAPPTPPPPPPPPPPRPLAKAARAQKSPPVSQLFQLLNKQDNSRNLSQSVNGNKSQVNSAHNSIVGEIQNRSAHLIAIKADIETKGEFINDLIQKVLTTCFSDMEDVMKFVDWLDKELATLADERAVLKHFKWPEKKADTLQEAAVEYRELKKLEKELSSYSDDPNIHYGVALKKMANLLDKSEQRIRRLVRLRGSSMRSYQDFKIPVEWMLDSGMICKIKRASIKLAKTYMNRVANELQSARNLDRESTKEALLLQGVRFAYRTHQFAGGLDPETLCALEEIKQRVPSHLRLARGNMAGNLS.

Low complexity predominate over residues 1–15 (MSRISTTSTTPSRVR). A disordered region spans residues 1 to 54 (MSRISTTSTTPSRVRAANSHYSVISKPRAQDDNGLTGGKPKSSGYDVKNDPAKR). Residues 104–180 (VMATAAAEDE…EAKISSLSSN (77 aa)) adopt a coiled-coil conformation. Residues 207 to 285 (KVKKEVAVES…AARAQKSPPV (79 aa)) are disordered. Composition is skewed to pro residues over residues 221–236 (PPSPSPSRLPPTPPLP) and 256–272 (FAPPTPPPPPPPPPPRP). Positions 392–448 (KADTLQEAAVEYRELKKLEKELSSYSDDPNIHYGVALKKMANLLDKSEQRIRRLVRL) form a coiled coil.

This sequence belongs to the IPGA1 family.

It is found in the cytoplasm. Its subcellular location is the cytoskeleton. Microtubule-associated protein probably involved in the regulation of microtubule organization. This chain is INCREASED PETAL GROWTH ANISOTROPY 1-like protein 2, found in Arabidopsis thaliana (Mouse-ear cress).